The following is a 180-amino-acid chain: Large ribosomal subunit protein uL6 (180 aa).

This sequence belongs to the universal ribosomal protein uL6 family. In terms of assembly, part of the 50S ribosomal subunit.

This protein binds to the 23S rRNA, and is important in its secondary structure. It is located near the subunit interface in the base of the L7/L12 stalk, and near the tRNA binding site of the peptidyltransferase center. In Anaeromyxobacter sp. (strain K), this protein is Large ribosomal subunit protein uL6.